Reading from the N-terminus, the 110-residue chain is Thiosulfate sulfurtransferase GlpE (110 aa).

The Rhodanese domain maps to 17–105 (RENGAQVVDI…WRSVYPADTS (89 aa)). Cys65 serves as the catalytic Cysteine persulfide intermediate.

It belongs to the GlpE family.

It is found in the cytoplasm. The catalysed reaction is thiosulfate + hydrogen cyanide = thiocyanate + sulfite + 2 H(+). It catalyses the reaction thiosulfate + [thioredoxin]-dithiol = [thioredoxin]-disulfide + hydrogen sulfide + sulfite + 2 H(+). Functionally, transferase that catalyzes the transfer of sulfur from thiosulfate to thiophilic acceptors such as cyanide or dithiols. May function in a CysM-independent thiosulfate assimilation pathway by catalyzing the conversion of thiosulfate to sulfite, which can then be used for L-cysteine biosynthesis. The sequence is that of Thiosulfate sulfurtransferase GlpE from Pseudomonas aeruginosa (strain LESB58).